A 253-amino-acid polypeptide reads, in one-letter code: UPF0758 protein Bxeno_A3578 (253 aa).

One can recognise an MPN domain in the interval 131-253; it reads LINSPEAVEN…VYSFARAGWP (123 aa). Zn(2+) is bound by residues histidine 202, histidine 204, and aspartate 215. Residues 202-215 carry the JAMM motif motif; it reads HNHPSGAVQPSASD.

It belongs to the UPF0758 family.

The sequence is that of UPF0758 protein Bxeno_A3578 from Paraburkholderia xenovorans (strain LB400).